A 352-amino-acid polypeptide reads, in one-letter code: Biotin synthase (352 aa).

Residues 44 to 262 (NRVQVSTLLS…LAVARILMPK (219 aa)) enclose the Radical SAM core domain. [4Fe-4S] cluster-binding residues include cysteine 59, cysteine 63, and cysteine 66. Cysteine 103, cysteine 134, cysteine 194, and arginine 266 together coordinate [2Fe-2S] cluster.

This sequence belongs to the radical SAM superfamily. Biotin synthase family. As to quaternary structure, homodimer. It depends on [4Fe-4S] cluster as a cofactor. The cofactor is [2Fe-2S] cluster.

The enzyme catalyses (4R,5S)-dethiobiotin + (sulfur carrier)-SH + 2 reduced [2Fe-2S]-[ferredoxin] + 2 S-adenosyl-L-methionine = (sulfur carrier)-H + biotin + 2 5'-deoxyadenosine + 2 L-methionine + 2 oxidized [2Fe-2S]-[ferredoxin]. Its pathway is cofactor biosynthesis; biotin biosynthesis; biotin from 7,8-diaminononanoate: step 2/2. Its function is as follows. Catalyzes the conversion of dethiobiotin (DTB) to biotin by the insertion of a sulfur atom into dethiobiotin via a radical-based mechanism. In Pseudomonas entomophila (strain L48), this protein is Biotin synthase.